The sequence spans 449 residues: UNC93-like protein MFSD11 (449 aa).

The chain crosses the membrane as a helical span at residues 8-28; that stretch reads LFNIVILGVAFMFMFTAFQTC. Asn-40 is a glycosylation site (N-linked (GlcNAc...) asparagine). 5 helical membrane passes run 53 to 73, 74 to 94, 96 to 116, 138 to 158, and 170 to 190; these read AIIYGVFSASNLITPSVVAIV, GPQISMFVSGLFYSMYIAVFI, PFPWSFYTASVFIGIAAAVLW, IFWALLQSSLFFGNLYIYFAW, and RTVFIALTVISLVGTVLFFLI. Ser-204 is modified (phosphoserine). The next 6 membrane-spanning stretches (helical) occupy residues 239–259, 277–297, 309–329, 359–379, 385–405, and 410–430; these read MLLLSVTTAYTGLELTFFSGV, LIGLSGIFIGIGEILGGSLFG, PVVLLGTLVHFVAFYLIFLNM, FLLGLGDSCFNTQLLSILGFL, APAFAVFKFVQSICAAVAFFY, and LLHWQLLVMVIFGFFGTISFF.

This sequence belongs to the unc-93 family. As to expression, widely expressed.

It localises to the membrane. This chain is UNC93-like protein MFSD11 (Mfsd11), found in Mus musculus (Mouse).